The chain runs to 755 residues: Tryptophan 2-monooxygenase (755 aa).

4 residues coordinate FMN: S247, E267, K275, and R295. R295 contributes to the substrate binding site.

It belongs to the tryptophan 2-monooxygenase family. FMN is required as a cofactor.

It carries out the reaction L-tryptophan + O2 = indole-3-acetamide + CO2 + H2O. It functions in the pathway plant hormone metabolism; auxin biosynthesis. This Agrobacterium vitis (Rhizobium vitis) protein is Tryptophan 2-monooxygenase (iaaM).